The following is a 142-amino-acid chain: Protein CPn_0742/CP_0003/CPj0742/CpB0770 (142 aa).

The tract at residues 115-142 (LHPTKESKRPKQKLSSTKKNKKKNWIPL) is disordered. Residues 124–142 (PKQKLSSTKKNKKKNWIPL) are compositionally biased toward basic residues.

Belongs to the chlamydial CPn_0742/CT_635/TC_0003 family.

The chain is Protein CPn_0742/CP_0003/CPj0742/CpB0770 from Chlamydia pneumoniae (Chlamydophila pneumoniae).